The sequence spans 209 residues: Large ribosomal subunit protein uL3 (209 aa).

Belongs to the universal ribosomal protein uL3 family. In terms of assembly, part of the 50S ribosomal subunit. Forms a cluster with proteins L14 and L19.

Functionally, one of the primary rRNA binding proteins, it binds directly near the 3'-end of the 23S rRNA, where it nucleates assembly of the 50S subunit. In Moorella thermoacetica (strain ATCC 39073 / JCM 9320), this protein is Large ribosomal subunit protein uL3.